Consider the following 317-residue polypeptide: Serine/threonine-protein phosphatase PP1 isozyme 1 (317 aa).

Residues D75, H77, D103, and N135 each contribute to the Mn(2+) site. Residue H136 is the Proton donor of the active site. Residues H184 and H259 each contribute to the Mn(2+) site.

The protein belongs to the PPP phosphatase family. PP-1 subfamily. Mn(2+) is required as a cofactor.

The catalysed reaction is O-phospho-L-seryl-[protein] + H2O = L-seryl-[protein] + phosphate. The enzyme catalyses O-phospho-L-threonyl-[protein] + H2O = L-threonyl-[protein] + phosphate. The chain is Serine/threonine-protein phosphatase PP1 isozyme 1 (NPP1) from Nicotiana tabacum (Common tobacco).